A 55-amino-acid chain; its full sequence is Large ribosomal subunit protein bL33 (55 aa).

Belongs to the bacterial ribosomal protein bL33 family.

The sequence is that of Large ribosomal subunit protein bL33 from Rhizorhabdus wittichii (strain DSM 6014 / CCUG 31198 / JCM 15750 / NBRC 105917 / EY 4224 / RW1) (Sphingomonas wittichii).